The sequence spans 252 residues: MKLISWNVNGLRAVMRKMDFLSYLKEEDADIICLQETKIQDGQVDLQPEDYHVYWNYAVKKGYSGTAVFSKQEPLQVIYGIGVEEHDQEGRVITLEFENVFVMTVYTPNSRRGLERIDYRMQWEEALLSYILELDQKKPVILCGDLNVAHQEIDLKNPKANRNNAGFSDQEREAFTRFLEAGFVDSFRHVYPDLEGAYSWWSYRAGARDRNIGWRIDYFVVSESLKEQIEDASISADVMGSDHCPVELIINI.

A Mg(2+)-binding site is contributed by E36. Y106 is an active-site residue. Residues D145, N147, and D242 each coordinate Mg(2+). D145 functions as the Proton donor/acceptor in the catalytic mechanism.

This sequence belongs to the DNA repair enzymes AP/ExoA family. Requires Mg(2+) as cofactor. Mn(2+) serves as cofactor.

It localises to the cytoplasm. It carries out the reaction Exonucleolytic cleavage in the 3'- to 5'-direction to yield nucleoside 5'-phosphates.. This Bacillus subtilis (strain 168) protein is Exodeoxyribonuclease (exoA).